A 562-amino-acid polypeptide reads, in one-letter code: Formate--tetrahydrofolate ligase (562 aa).

71–78 (TPAGEGKS) contacts ATP.

The protein belongs to the formate--tetrahydrofolate ligase family.

The enzyme catalyses (6S)-5,6,7,8-tetrahydrofolate + formate + ATP = (6R)-10-formyltetrahydrofolate + ADP + phosphate. Its pathway is one-carbon metabolism; tetrahydrofolate interconversion. The chain is Formate--tetrahydrofolate ligase from Bacillus cereus (strain AH187).